The sequence spans 32 residues: Cytochrome b6-f complex subunit 8 (32 aa).

Residues Ile-6–Val-26 traverse the membrane as a helical segment.

It belongs to the PetN family. As to quaternary structure, the 4 large subunits of the cytochrome b6-f complex are cytochrome b6, subunit IV (17 kDa polypeptide, PetD), cytochrome f and the Rieske protein, while the 4 small subunits are PetG, PetL, PetM and PetN. The complex functions as a dimer.

It localises to the plastid. The protein localises to the chloroplast thylakoid membrane. Functionally, component of the cytochrome b6-f complex, which mediates electron transfer between photosystem II (PSII) and photosystem I (PSI), cyclic electron flow around PSI, and state transitions. The polypeptide is Cytochrome b6-f complex subunit 8 (Pinus koraiensis (Korean pine)).